A 174-amino-acid polypeptide reads, in one-letter code: Inactive signal peptidase IA (174 aa).

Topologically, residues 1-7 (MKKVVKY) are cytoplasmic. Residues 8–28 (LISLILAIIIVLFVQTFVIVG) traverse the membrane as a helical segment. Over 29 to 174 (HVIPNNDMSP…FSKWTIQFKS (146 aa)) the chain is Extracellular.

Belongs to the peptidase S26 family.

The protein localises to the cell membrane. Catalytically inactive. This is Inactive signal peptidase IA (spsA) from Staphylococcus aureus (strain MRSA252).